The chain runs to 201 residues: Prostamide/prostaglandin F synthase (201 aa).

A Phosphotyrosine modification is found at Y108.

The protein belongs to the peroxiredoxin-like PRXL2 family. Prostamide/prostaglandin F synthase subfamily.

Its subcellular location is the cytoplasm. The protein resides in the cytosol. It catalyses the reaction prostaglandin H2 + [thioredoxin]-dithiol = prostaglandin F2alpha + [thioredoxin]-disulfide. The catalysed reaction is prostamide F2alpha + [thioredoxin]-disulfide = prostamide H2 + [thioredoxin]-dithiol. Catalyzes the reduction of prostaglandin-ethanolamide H(2) (prostamide H(2)) to prostamide F(2alpha) with NADPH as proton donor. Also able to reduce prostaglandin H(2) to prostaglandin F(2alpha). This Bos taurus (Bovine) protein is Prostamide/prostaglandin F synthase (PRXL2B).